The chain runs to 490 residues: Lysine--tRNA ligase (490 aa).

2 residues coordinate Mg(2+): Glu-400 and Glu-407.

It belongs to the class-II aminoacyl-tRNA synthetase family. In terms of assembly, homodimer. Mg(2+) is required as a cofactor.

Its subcellular location is the cytoplasm. The enzyme catalyses tRNA(Lys) + L-lysine + ATP = L-lysyl-tRNA(Lys) + AMP + diphosphate. The polypeptide is Lysine--tRNA ligase (lysS) (Mycoplasma genitalium (strain ATCC 33530 / DSM 19775 / NCTC 10195 / G37) (Mycoplasmoides genitalium)).